The primary structure comprises 485 residues: Warthog protein 1 (485 aa).

The first 21 residues, 1 to 21 (MMVMNPLTATFLAALIGTAAS), serve as a signal peptide directing secretion. Positions 236-258 (DQRLSPSTDVQSDSYVSPTEADP) are disordered. The segment covering 239–252 (LSPSTDVQSDSYVS) has biased composition (polar residues).

The protein belongs to the hedgehog family. In terms of processing, the C-terminal domain displays an autoproteolysis activity.

It localises to the secreted. It is found in the cell surface. Its subcellular location is the cell membrane. The protein resides in the extracellular space. Its function is as follows. Intercellular signal essential for a variety of patterning events during development. This chain is Warthog protein 1 (wrt-1), found in Caenorhabditis elegans.